The following is a 207-amino-acid chain: Probable nicotinate-nucleotide adenylyltransferase (207 aa).

Belongs to the NadD family.

The enzyme catalyses nicotinate beta-D-ribonucleotide + ATP + H(+) = deamido-NAD(+) + diphosphate. It functions in the pathway cofactor biosynthesis; NAD(+) biosynthesis; deamido-NAD(+) from nicotinate D-ribonucleotide: step 1/1. Its function is as follows. Catalyzes the reversible adenylation of nicotinate mononucleotide (NaMN) to nicotinic acid adenine dinucleotide (NaAD). This Desulfitobacterium hafniense (strain DSM 10664 / DCB-2) protein is Probable nicotinate-nucleotide adenylyltransferase.